A 64-amino-acid polypeptide reads, in one-letter code: Defensin-like protein 123 (64 aa).

Intrachain disulfides connect Cys-19/Cys-62, Cys-29/Cys-49, Cys-34/Cys-56, and Cys-38/Cys-58.

Belongs to the DEFL family.

The sequence is that of Defensin-like protein 123 from Arabidopsis thaliana (Mouse-ear cress).